Reading from the N-terminus, the 749-residue chain is Soluble starch synthase 2-1, chloroplastic/amyloplastic (749 aa).

Residues 1–44 constitute a chloroplast transit peptide; that stretch reads MAAAAVSSLLAPSGSCYSPGCHSCWGPGPGGGRRLPSPRRRPIT. Residue Lys-272 participates in ADP-alpha-D-glucose binding.

It belongs to the glycosyltransferase 1 family. Bacterial/plant glycogen synthase subfamily. Expressed in endosperm, leaves, and weakly in roots.

The protein resides in the plastid. Its subcellular location is the amyloplast. The protein localises to the chloroplast. The catalysed reaction is [(1-&gt;4)-alpha-D-glucosyl](n) + ADP-alpha-D-glucose = [(1-&gt;4)-alpha-D-glucosyl](n+1) + ADP + H(+). It participates in glycan biosynthesis; starch biosynthesis. Functionally, may be involved in starch synthesis in endosperm amyloplasts and contribute to the deposition of transient starch in chloroplasts of leaves. The sequence is that of Soluble starch synthase 2-1, chloroplastic/amyloplastic (SSII-1) from Oryza sativa subsp. japonica (Rice).